A 414-amino-acid polypeptide reads, in one-letter code: Alanine--glyoxylate aminotransferase (414 aa).

The N-terminal 23 residues, 1-23 (MFRMLAKASVTLGSRAAGWVRTM), are a transit peptide targeting the mitochondrion. Lys-231 carries the N6-(pyridoxal phosphate)lysine modification. At Lys-247 the chain carries N6-acetyllysine; alternate. Position 247 is an N6-succinyllysine; alternate (Lys-247). Lys-256 carries the N6-acetyllysine modification. An N6-acetyllysine; alternate modification is found at Lys-330. At Lys-330 the chain carries N6-succinyllysine; alternate. Lys-334 carries the post-translational modification N6-acetyllysine. Arg-382 serves as a coordination point for substrate. Positions 412 to 414 (NKL) match the Microbody targeting signal motif.

Belongs to the class-V pyridoxal-phosphate-dependent aminotransferase family. In terms of assembly, homodimer. It depends on pyridoxal 5'-phosphate as a cofactor.

It is found in the peroxisome. Its subcellular location is the mitochondrion matrix. It carries out the reaction L-serine + pyruvate = 3-hydroxypyruvate + L-alanine. The catalysed reaction is glyoxylate + L-alanine = glycine + pyruvate. In terms of biological role, catalyzes the transamination of glyoxylate to glycine and contributes to the glyoxylate detoxification. Functionally, catalyzes the transamination between L-serine and pyruvate and weakly contributes to gluconeogenesis from the L-serine metabolism. The polypeptide is Alanine--glyoxylate aminotransferase (Mus musculus (Mouse)).